Here is a 696-residue protein sequence, read N- to C-terminus: Methionine--tRNA ligase (696 aa).

The 'HIGH' region motif lies at proline 12–histidine 22. The Zn(2+) site is built by cysteine 143, cysteine 146, cysteine 156, and cysteine 159. Positions lysine 330–serine 334 match the 'KMSKS' region motif. Residue lysine 333 coordinates ATP. One can recognise a tRNA-binding domain in the interval aspartate 593 to arginine 696.

It belongs to the class-I aminoacyl-tRNA synthetase family. MetG type 1 subfamily. In terms of assembly, homodimer. It depends on Zn(2+) as a cofactor.

Its subcellular location is the cytoplasm. The catalysed reaction is tRNA(Met) + L-methionine + ATP = L-methionyl-tRNA(Met) + AMP + diphosphate. Is required not only for elongation of protein synthesis but also for the initiation of all mRNA translation through initiator tRNA(fMet) aminoacylation. The protein is Methionine--tRNA ligase of Xanthomonas campestris pv. campestris (strain 8004).